We begin with the raw amino-acid sequence, 143 residues long: uncharacterized protein (143 aa).

Positions methionine 1–alanine 16 are cleaved as a signal peptide. Residues glycine 114–glycine 134 form a helical membrane-spanning segment.

Its subcellular location is the membrane. This is an uncharacterized protein from Mycobacterium tuberculosis (strain CDC 1551 / Oshkosh).